Reading from the N-terminus, the 719-residue chain is Potassium-transporting ATPase ATP-binding subunit (719 aa).

4 consecutive transmembrane segments (helical) span residues Leu35–Phe55, Val62–Glu82, Ile228–Gly248, and Phe254–Met274. Catalysis depends on Asp318, which acts as the 4-aspartylphosphate intermediate. ATP is bound by residues Asp355 and Glu359. Positions Gly372–Pro396 are disordered. Residues Lys373–Ser383 are compositionally biased toward polar residues. ATP is bound by residues Phe416–Ser423 and Lys435. The Mg(2+) site is built by Asp554 and Asp558. Helical transmembrane passes span Phe624–Leu644, Ala652–Leu672, and Leu698–Phe718.

The protein belongs to the cation transport ATPase (P-type) (TC 3.A.3) family. Type IA subfamily. The system is composed of three essential subunits: KdpA, KdpB and KdpC. The complex also contains KdpF, a small non-essential subunit.

The protein localises to the cell membrane. It catalyses the reaction K(+)(out) + ATP + H2O = K(+)(in) + ADP + phosphate + H(+). Functionally, part of the high-affinity ATP-driven potassium transport (or Kdp) system, which catalyzes the hydrolysis of ATP coupled with the electrogenic transport of potassium into the cytoplasm. This subunit is responsible for energy coupling to the transport system and for the release of the potassium ions to the cytoplasm. The Kdp system is essential for growth under K(+) limitation, and for survival under desiccation and salt crystal inclusion. This chain is Potassium-transporting ATPase ATP-binding subunit, found in Halobacterium salinarum (strain ATCC 29341 / DSM 671 / R1).